A 459-amino-acid polypeptide reads, in one-letter code: LETM1 domain-containing protein LETM2, mitochondrial (459 aa).

A mitochondrion-targeting transit peptide spans 1–25 (MAFYSYNSFLAIFWTRLPGHSVHPP). Over 26–176 (CSHFPPLAFF…LLRTCADVFR (151 aa)) the chain is Mitochondrial intermembrane. A disordered region spans residues 88 to 114 (GKPQPEQIPEEPKATDPQPTKDDQTEV). Residues 97–111 (EEPKATDPQPTKDDQ) show a composition bias toward basic and acidic residues. The helical transmembrane segment at 177 to 197 (LVPFVVFIIVPFMEFLIPVFL) threads the bilayer. Over 198-459 (KLFPDMLPST…QNSKANSKGA (262 aa)) the chain is Mitochondrial matrix. The region spanning 220–440 (KMMGAKLEIA…PAPQLNGTKI (221 aa)) is the Letm1 RBD domain. The interval 403–459 (LPPSIETPKTNLGIPSSPPPESKEDITDPAPQLNGTKILQAKSQETSQNSKANSKGA) is disordered. The segment covering 435 to 459 (LNGTKILQAKSQETSQNSKANSKGA) has biased composition (polar residues).

As to expression, testis and sperm.

Its subcellular location is the mitochondrion inner membrane. The polypeptide is LETM1 domain-containing protein LETM2, mitochondrial (Letm2) (Rattus norvegicus (Rat)).